The sequence spans 98 residues: Large ribosomal subunit protein uL23 (98 aa).

Belongs to the universal ribosomal protein uL23 family. In terms of assembly, part of the 50S ribosomal subunit. Contacts protein L29, and trigger factor when it is bound to the ribosome.

In terms of biological role, one of the early assembly proteins it binds 23S rRNA. One of the proteins that surrounds the polypeptide exit tunnel on the outside of the ribosome. Forms the main docking site for trigger factor binding to the ribosome. This chain is Large ribosomal subunit protein uL23, found in Streptococcus pyogenes serotype M1.